The chain runs to 454 residues: Lamina-associated polypeptide 2, isoforms beta/gamma (454 aa).

The segment at 1–410 (MPEFLEDPSV…KSEKTKKGRS (410 aa)) is nucleoplasmic. Residues 5 to 48 (LEDPSVLTKDKLKSELVANNVTLPAGEQRKDVYVQLYLQHLTAR) form the LEM-like domain. Disordered stretches follow at residues 47 to 117 (ARNR…ELTN) and 149 to 265 (LREQ…VETS). Residues 49–108 (NRPPLPAGTNSKGPPDFSSDEEREPTPVLGSGAAAAGRSRAAVGRKATKKTDKPRQEDKD) are linker. At Thr-57 the chain carries Phosphothreonine. Residues Ser-59, Ser-66, and Ser-67 each carry the phosphoserine modification. Thr-74 carries the post-translational modification Phosphothreonine. Residues 78-93 (GSGAAAAGRSRAAVGR) show a composition bias toward low complexity. The residue at position 79 (Ser-79) is a Phosphoserine. An omega-N-methylarginine mark is found at Arg-86 and Arg-88. Positions 97–106 (KKTDKPRQED) are enriched in basic and acidic residues. Over residues 107–117 (KDDLDVTELTN) the composition is skewed to acidic residues. One can recognise an LEM domain in the interval 109–153 (DLDVTELTNEDLLDQLVKYGVNPGPIVGTTRKLYEKKLLKLREQG). The tract at residues 138–243 (TRKLYEKKLL…TSGSSKGGPL (106 aa)) is NAKAP95-binding N. Position 154 is a phosphothreonine (Thr-154). Residues 155 to 178 (ESRSSTPLPTISSSAENTRQNGSN) are compositionally biased toward polar residues. Residues Ser-156 and Ser-159 each carry the phosphoserine modification. Thr-160 and Thr-164 each carry phosphothreonine. Phosphoserine is present on residues Ser-166, Ser-168, Ser-177, Ser-180, Ser-184, and Ser-190. The segment covering 179–203 (DSDRYSDNEEDSKIELKLEKREPLK) has biased composition (basic and acidic residues). Position 207 is an N6-acetyllysine (Lys-207). The residue at position 211 (Thr-211) is a Phosphothreonine. Polar residues predominate over residues 220-237 (NQSYSQAGITETEWTSGS). 7 positions are modified to phosphoserine: Ser-222, Ser-224, Ser-250, Ser-254, Ser-265, Ser-292, and Ser-306. Residues 299–371 (TGNFKHASPI…SCRRPIKGAA (73 aa)) are binds lamins B. The tract at residues 300–374 (GNFKHASPIL…RPIKGAAGRP (75 aa)) is NAKAP95-binding C. Thr-312 carries the post-translational modification Phosphothreonine. Phosphoserine is present on Ser-315. Arg-320 bears the Citrulline mark. Ser-362, Ser-378, and Ser-385 each carry phosphoserine. An N6-acetyllysine modification is found at Lys-389. Residue Lys-401 forms a Glycyl lysine isopeptide (Lys-Gly) (interchain with G-Cter in SUMO2) linkage. Ser-402 is subject to Phosphoserine. The chain crosses the membrane as a helical; Signal-anchor for type II membrane protein span at residues 411 to 434 (IPVWIKILLFVVVAVFLFLVYQAM). Topologically, residues 435 to 454 (ETNQVNPFSNFLHVDPRKSN) are lumenal.

It belongs to the LEM family. As to quaternary structure, interacts with LMNB1, LMNB2, BANF1, AKAP8L, GMCL and chromosomes. Isoform Zeta interacts with BANF1/BAF and may sequester it in the cytoplasm. Post-translationally, mitosis-specific phosphorylation specifically abolishes its binding to lamin B and chromosomes. Citrullinated by PADI4. In terms of tissue distribution, expressed in many tissues. Most abundant in adult thymus and fetal liver.

The protein localises to the nucleus inner membrane. The protein resides in the cytoplasm. May help direct the assembly of the nuclear lamina and thereby help maintain the structural organization of the nuclear envelope. Possible receptor for attachment of lamin filaments to the inner nuclear membrane. May be involved in the control of initiation of DNA replication through its interaction with NAKAP95. In terms of biological role, thymopoietin (TP) and Thymopentin (TP5) may play a role in T-cell development and function. TP5 is an immunomodulating pentapeptide. The polypeptide is Lamina-associated polypeptide 2, isoforms beta/gamma (TMPO) (Homo sapiens (Human)).